Here is a 175-residue protein sequence, read N- to C-terminus: RNA pyrophosphohydrolase (175 aa).

The Nudix hydrolase domain occupies 8–159; it reads PYRTCVGMML…KRPVYERVVK (152 aa). The Nudix box motif lies at 47–68; the sequence is GGVDPGEDPWTAAKRELYEETS.

It belongs to the Nudix hydrolase family. RppH subfamily. Requires a divalent metal cation as cofactor.

Functionally, accelerates the degradation of transcripts by removing pyrophosphate from the 5'-end of triphosphorylated RNA, leading to a more labile monophosphorylated state that can stimulate subsequent ribonuclease cleavage. The polypeptide is RNA pyrophosphohydrolase (Rhodopseudomonas palustris (strain BisB18)).